The sequence spans 209 residues: Imidazole glycerol phosphate synthase subunit HisH (209 aa).

The 205-residue stretch at Met1–Ser205 folds into the Glutamine amidotransferase type-1 domain. The Nucleophile role is filled by Cys79. Active-site residues include His180 and Glu182.

In terms of assembly, heterodimer of HisH and HisF.

It localises to the cytoplasm. It catalyses the reaction 5-[(5-phospho-1-deoxy-D-ribulos-1-ylimino)methylamino]-1-(5-phospho-beta-D-ribosyl)imidazole-4-carboxamide + L-glutamine = D-erythro-1-(imidazol-4-yl)glycerol 3-phosphate + 5-amino-1-(5-phospho-beta-D-ribosyl)imidazole-4-carboxamide + L-glutamate + H(+). The catalysed reaction is L-glutamine + H2O = L-glutamate + NH4(+). Its pathway is amino-acid biosynthesis; L-histidine biosynthesis; L-histidine from 5-phospho-alpha-D-ribose 1-diphosphate: step 5/9. IGPS catalyzes the conversion of PRFAR and glutamine to IGP, AICAR and glutamate. The HisH subunit catalyzes the hydrolysis of glutamine to glutamate and ammonia as part of the synthesis of IGP and AICAR. The resulting ammonia molecule is channeled to the active site of HisF. This chain is Imidazole glycerol phosphate synthase subunit HisH, found in Bacillus mycoides (strain KBAB4) (Bacillus weihenstephanensis).